Here is an 89-residue protein sequence, read N- to C-terminus: MASKAFELQMMGYGLTTAEIHYHMPDHPGLLQLYVWQEYDLAPKFPTLKGFLDFWAKELDGVLHSVRVAHNRLISPREWRVVNGVFTLQ.

It participates in amino-acid biosynthesis; L-tryptophan biosynthesis. Probably necessary for the cotranslation of trpF. It may also function as a subunit or stabilizer of phosphoribosylanthranilate isomerase (trpF). The protein is Protein usg (usg) of Caulobacter vibrioides (strain ATCC 19089 / CIP 103742 / CB 15) (Caulobacter crescentus).